Reading from the N-terminus, the 313-residue chain is UbiA prenyltransferase claS (313 aa).

2 consecutive transmembrane segments (helical) span residues 30 to 52 and 57 to 79; these read FAGT…RALL and TFGT…GCIW. An NDxxDxxxD motif is present at residues 81 to 88; it reads DILDQDFD. Mg(2+)-binding residues include Asp84 and Asp88. The next 3 membrane-spanning stretches (helical) occupy residues 99–121, 131–148, and 155–177; these read IASG…FILM, AWMI…IYPL, and WPQA…YTTG. Asp205 and Asp209 together coordinate Mg(2+). The DxxxD signature appears at 205–209; the sequence is DKKDD. Residues 205-209 carry the YxxxK motif; the sequence is DKKDD. The next 3 membrane-spanning stretches (helical) occupy residues 227-247, 250-270, and 293-313; these read PVLS…GILN, ELPY…TQLW, and AIVW…GAIM.

It belongs to the UbiA prenyltransferase family. Mg(2+) serves as cofactor.

The protein resides in the membrane. The enzyme catalyses hydroquinone + (2E)-geranyl diphosphate = (2E)-geranylhydroquinone + diphosphate. Its pathway is secondary metabolite biosynthesis; terpenoid biosynthesis. Functionally, prenyltransferase; part of the gene cluster that mediates the biosynthesis of clavilactone A, a meroterpenoid that features a unique benzo-fused ten-membered carbocyclic ring unit with an alpha,beta-epoxy-gamma-lactone moiety, forming an intriguing 10/5/3 tricyclic nested skeleton. ClaR, ClaS and ClaT are sufficient to produce clavilactone A. Within the pathway, claS acts as an atypical UbiA prenyltransferase that transfers geranyl pyrophosphate (GPP) to hydroquinone (HYQ) instead of p-hydroxybenzoic acid (PHB), producing the first intermediate geranylhydroquinone. The cytochrome P450 monooxygenase claR then catalyzes the diradical coupling reaction between the intramolecular hydroquinone and allyl moieties to form the benzo-fused ten-membered carbocyclic ring unit of wigantol. Finally the cytochrome P450 monooxygenase claT exquisitely and stereoselectively assembles the alpha,beta-epoxy-gamma-lactone moiety, producing clavilactone A via arnebinol A. This chain is UbiA prenyltransferase claS, found in Ampulloclitocybe clavipes (Club foot).